Reading from the N-terminus, the 662-residue chain is Primary amine oxidase 2 (662 aa).

Positions 1–22 (MSQLLLFTILVFSSVFVIGSLS) are cleaved as a signal peptide. Asn-154 carries an N-linked (GlcNAc...) asparagine glycan. Residue 321-332 (FFDCGEFGCGQY) coordinates substrate. Asp-323 acts as the Proton acceptor in catalysis. The cysteines at positions 342 and 368 are disulfide-linked. 405-410 (VGNYDY) lines the substrate pocket. Tyr-408 functions as the Schiff-base intermediate with substrate; via topaquinone in the catalytic mechanism. Residue Tyr-408 is modified to 2',4',5'-topaquinone. The Cu cation site is built by His-464 and His-466. Asp-473 and Asp-475 together coordinate Mn(2+). Asn-568 is a glycosylation site (N-linked (GlcNAc...) asparagine). Positions 602 and 603 each coordinate Mn(2+). His-613 contacts Cu cation.

The protein belongs to the copper/topaquinone oxidase family. In terms of assembly, homodimer. Requires Cu cation as cofactor. The cofactor is Mn(2+). L-topaquinone serves as cofactor. In terms of processing, topaquinone (TPQ) is generated by copper-dependent autoxidation of a specific tyrosyl residue.

It catalyses the reaction a primary methyl amine + O2 + H2O = an aldehyde + H2O2 + NH4(+). This Arabidopsis thaliana (Mouse-ear cress) protein is Primary amine oxidase 2.